We begin with the raw amino-acid sequence, 1253 residues long: Pleckstrin homology-like domain family B member 2 (1253 aa).

Positions methionine 1–aspartate 12 are enriched in basic and acidic residues. Disordered stretches follow at residues methionine 1–tyrosine 43, leucine 60–aspartate 159, and aspartate 187–serine 212. The span at asparagine 29–tyrosine 43 shows a compositional bias: polar residues. Serine 71 and serine 73 each carry phosphoserine. Over residues proline 74–tyrosine 96 the composition is skewed to polar residues. The span at alanine 126 to glutamate 144 shows a compositional bias: basic and acidic residues. Phosphoserine is present on residues serine 157, serine 204, serine 212, serine 242, and serine 245. A disordered region spans residues asparagine 265–leucine 286. Phosphoserine occurs at positions 330, 334, 348, 351, 384, 387, 415, 420, 468, 489, and 501. Threonine 504 is modified (phosphothreonine). A Phosphoserine modification is found at serine 513. A disordered region spans residues leucine 525–tyrosine 567. Phosphothreonine occurs at positions 550 and 574. Coiled-coil stretches lie at residues serine 584–cysteine 696 and phenylalanine 722–leucine 807. Threonine 898 bears the Phosphothreonine mark. Residues isoleucine 1032–isoleucine 1098 are a coiled coil. The region spanning glutamate 1143–glutamate 1246 is the PH domain.

In terms of assembly, interacts with FLNC. Interacts with AMOTL2; interaction may facilitate PHLDB2 localization to the myotube podosome cortex that surrounds the core. Part of a cortical microtubule stabilization complex (CMSC) composed of KANK1, PPFIA1, PPFIBP1, ERC1/ELKS, PHLDB2/LL5beta, CLASPs, KIF21A and possibly additional interactors; within CMSCs KANK1 and PHLDB2/LL5beta appear to be the core components for targeting of microtubule-binding proteins KIF21A and CLASPs, whereas PPFIA1, PPFIBP1 and ERC1/ELKS serve as scaffolds for protein clustering.

It localises to the cytoplasm. The protein localises to the cell cortex. The protein resides in the membrane. It is found in the cell projection. Its subcellular location is the podosome. Functionally, seems to be involved in the assembly of the postsynaptic apparatus. May play a role in acetyl-choline receptor (AChR) aggregation in the postsynaptic membrane. In Homo sapiens (Human), this protein is Pleckstrin homology-like domain family B member 2 (PHLDB2).